A 233-amino-acid polypeptide reads, in one-letter code: Lipoprotein-releasing system ATP-binding protein LolD (233 aa).

In terms of domain architecture, ABC transporter spans 6 to 233 (LQCDNLCKRY…TAELSLMGAE (228 aa)). 42 to 49 (GSSGSGKS) contacts ATP.

This sequence belongs to the ABC transporter superfamily. Lipoprotein translocase (TC 3.A.1.125) family. As to quaternary structure, the complex is composed of two ATP-binding proteins (LolD) and two transmembrane proteins (LolC and LolE).

The protein resides in the cell inner membrane. Functionally, part of the ABC transporter complex LolCDE involved in the translocation of mature outer membrane-directed lipoproteins, from the inner membrane to the periplasmic chaperone, LolA. Responsible for the formation of the LolA-lipoprotein complex in an ATP-dependent manner. The chain is Lipoprotein-releasing system ATP-binding protein LolD from Escherichia coli O6:K15:H31 (strain 536 / UPEC).